A 285-amino-acid chain; its full sequence is Hydroxyethylthiazole kinase (285 aa).

Methionine 43 serves as a coordination point for substrate. ATP-binding residues include lysine 119 and serine 172. Glycine 199 is a substrate binding site.

This sequence belongs to the Thz kinase family. Mg(2+) is required as a cofactor.

It carries out the reaction 5-(2-hydroxyethyl)-4-methylthiazole + ATP = 4-methyl-5-(2-phosphooxyethyl)-thiazole + ADP + H(+). It functions in the pathway cofactor biosynthesis; thiamine diphosphate biosynthesis; 4-methyl-5-(2-phosphoethyl)-thiazole from 5-(2-hydroxyethyl)-4-methylthiazole: step 1/1. Catalyzes the phosphorylation of the hydroxyl group of 4-methyl-5-beta-hydroxyethylthiazole (THZ). In Desulfovibrio desulfuricans (strain ATCC 27774 / DSM 6949 / MB), this protein is Hydroxyethylthiazole kinase.